Consider the following 828-residue polypeptide: E3 ubiquitin-protein ligase bre-1 (828 aa).

The segment at 1-25 is disordered; the sequence is MMKRNNEGIGGEGVANSPPDDTQQK. Residues 1–309 are interaction with ubc-1; the sequence is MMKRNNEGIG…SREIEALRAD (309 aa). Coiled-coil stretches lie at residues 53–92 and 185–251; these read QAAK…FLKV and HKEL…TEKQ. Low complexity predominate over residues 269 to 298; sequence ASGNATASSSATLNQSEKKMGSPGSPPSES. The disordered stretch occupies residues 269-304; the sequence is ASGNATASSSATLNQSEKKMGSPGSPPSESTSREIE. Coiled-coil stretches lie at residues 311 to 345, 460 to 616, and 660 to 756; these read DEQA…KMET, VNTL…RNLK, and DEVL…NDSA. Residues 776–815 form an RING-type zinc finger; it reads CPSCKTRPKDCIMLKCYHLFCETCIKTMYDTRQRKCPKCN.

It belongs to the BRE1 family. As to quaternary structure, interacts with ubc-1. Interacts with mrg-1.

It localises to the nucleus. The enzyme catalyses S-ubiquitinyl-[E2 ubiquitin-conjugating enzyme]-L-cysteine + [acceptor protein]-L-lysine = [E2 ubiquitin-conjugating enzyme]-L-cysteine + N(6)-ubiquitinyl-[acceptor protein]-L-lysine.. Its pathway is protein modification; protein ubiquitination. Its function is as follows. E3 ubiquitin-protein ligase that mediates monoubiquitination of 'Lys-117' of histone H2B. H2B 'Lys-117' ubiquitination gives a specific tag for epigenetic transcriptional activation and is also prerequisite for histone H3 'Lys-4' and 'Lys-79' methylation. Involved in regulating stem cell proliferative fate. The polypeptide is E3 ubiquitin-protein ligase bre-1 (Caenorhabditis briggsae).